The primary structure comprises 298 residues: Nucleoid occlusion protein (298 aa).

A DNA-binding region (H-T-H motif) is located at residues 152 to 171; that stretch reads EALAQRLGKGQSTVANKLRL.

This sequence belongs to the ParB family.

It localises to the cytoplasm. The protein localises to the nucleoid. Effects nucleoid occlusion by binding relatively nonspecifically to DNA and preventing the assembly of the division machinery in the vicinity of the nucleoid, especially under conditions that disturb the cell cycle. It helps to coordinate cell division and chromosome segregation by preventing the formation of the Z ring through the nucleoid, which would cause chromosome breakage. This Lysinibacillus sphaericus (strain C3-41) protein is Nucleoid occlusion protein.